A 30-amino-acid chain; its full sequence is M-poneritoxin-Nc3a (30 aa).

This sequence belongs to the ponericin-G family. Expressed by the venom gland.

The protein resides in the secreted. The protein localises to the target cell membrane. Its function is as follows. Membrane-perturbating peptide with multiple activities. It is insecticidal, since it induces contractile paralysis in insects (L.cuprina) during several hours and death after 24 hours. It shows a relatively strong and broad-spectrum antibacterial activity against both Gram-positive and Gram-negative bacteria (MIC&lt;20 uM). It is also antiparasitic, since it potently inhibits the larval development of the major pathogenic nematode of ruminants (H.contortus, IC(50)=5.6 uM) and reduces the motility of adult males of the other nematode B.malayi. It also shows cytotoxic activity against HEK293 cells (EC(50)=5-7 uM) but does not induce hemolysis in human erythrocytes. In addition, it causes a moderate increase in intracellular calcium concentration on neuronal and epithelial cell lines, which supports a non-specific membrane perturbation mechanism of action. In vivo, it induces pain by intraplantar injection into mice, suggesting a defensive function against vertebrate predators. In Neoponera commutata (Large hunting ant), this protein is M-poneritoxin-Nc3a.